Reading from the N-terminus, the 327-residue chain is D-alanine--D-alanine ligase (327 aa).

The 200-residue stretch at Lys-113–Ala-312 folds into the ATP-grasp domain. ATP is bound at residue Ala-139–Thr-194. Mg(2+) is bound by residues Asp-266, Glu-279, and Asn-281.

Belongs to the D-alanine--D-alanine ligase family. The cofactor is Mg(2+). It depends on Mn(2+) as a cofactor.

The protein resides in the cytoplasm. The enzyme catalyses 2 D-alanine + ATP = D-alanyl-D-alanine + ADP + phosphate + H(+). The protein operates within cell wall biogenesis; peptidoglycan biosynthesis. Cell wall formation. The chain is D-alanine--D-alanine ligase from Cupriavidus necator (strain ATCC 17699 / DSM 428 / KCTC 22496 / NCIMB 10442 / H16 / Stanier 337) (Ralstonia eutropha).